The sequence spans 708 residues: Polyribonucleotide nucleotidyltransferase (708 aa).

Mg(2+) is bound by residues Asp-488 and Asp-494. Residues 555-614 enclose the KH domain; the sequence is PRIYTMKIPQKKIAEVIGKGGATIRQLTEETGTTIEIGDDGTIKIAATDGESAANAISRI. Residues 624–692 form the S1 motif domain; it reads GTIYEGKVVR…RQGRVRLSIK (69 aa).

This sequence belongs to the polyribonucleotide nucleotidyltransferase family. As to quaternary structure, component of the RNA degradosome, which is a multiprotein complex involved in RNA processing and mRNA degradation. Requires Mg(2+) as cofactor.

The protein resides in the cytoplasm. The enzyme catalyses RNA(n+1) + phosphate = RNA(n) + a ribonucleoside 5'-diphosphate. Functionally, involved in mRNA degradation. Catalyzes the phosphorolysis of single-stranded polyribonucleotides processively in the 3'- to 5'-direction. The chain is Polyribonucleotide nucleotidyltransferase from Pseudoalteromonas translucida (strain TAC 125).